The following is a 234-amino-acid chain: Probable GTP-binding protein EngB (234 aa).

An EngB-type G domain is found at 23 to 209 (AVPEVAFAGR…QRTVAGWLCL (187 aa)). GTP is bound by residues 31-38 (GRSNAGKS), 58-62 (GRTQH), 82-85 (DLPG), 149-152 (TKAD), and 187-190 (LFSS). Mg(2+) contacts are provided by S38 and T60. The tract at residues 210 to 234 (PEAMPPSPDAEPAKKTPSPDAQRGE) is disordered.

This sequence belongs to the TRAFAC class TrmE-Era-EngA-EngB-Septin-like GTPase superfamily. EngB GTPase family. The cofactor is Mg(2+).

In terms of biological role, necessary for normal cell division and for the maintenance of normal septation. In Ralstonia nicotianae (strain ATCC BAA-1114 / GMI1000) (Ralstonia solanacearum), this protein is Probable GTP-binding protein EngB.